The primary structure comprises 246 residues: 2-deoxyglucose-6-phosphate phosphatase 1 (246 aa).

The Nucleophile role is filled by aspartate 83. Aspartate 83 provides a ligand contact to Mg(2+). Residues aspartate 83, glutamate 92, and 146–149 (DVKN) each bind substrate. Aspartate 183 lines the Mg(2+) pocket.

The protein belongs to the HAD-like hydrolase superfamily. DOG/GPP family. The cofactor is Mg(2+).

The enzyme catalyses 2-deoxy-D-glucose 6-phosphate + H2O = 2-deoxy-D-glucose + phosphate. Phosphatase that is active on 2-deoxy-D-glucose 6-phosphate (2-DOG-6P), as well as on fructose-1-P. In Saccharomyces cerevisiae (strain ATCC 204508 / S288c) (Baker's yeast), this protein is 2-deoxyglucose-6-phosphate phosphatase 1.